The sequence spans 616 residues: Chaperone protein HscA homolog (616 aa).

It belongs to the heat shock protein 70 family.

In terms of biological role, probable chaperone. Has a low intrinsic ATPase activity which is markedly stimulated by HscB. The sequence is that of Chaperone protein HscA homolog from Vibrio cholerae serotype O1 (strain ATCC 39315 / El Tor Inaba N16961).